We begin with the raw amino-acid sequence, 98 residues long: uncharacterized protein (98 aa).

2 consecutive transmembrane segments (helical) span residues 2 to 22 (IVTL…GLWW) and 70 to 90 (AAKA…LPIL).

It localises to the cell membrane. This is an uncharacterized protein from Sinorhizobium fredii (strain NBRC 101917 / NGR234).